The following is a 569-amino-acid chain: Proline--tRNA ligase (569 aa).

Belongs to the class-II aminoacyl-tRNA synthetase family. ProS type 1 subfamily. In terms of assembly, homodimer.

The protein resides in the cytoplasm. It carries out the reaction tRNA(Pro) + L-proline + ATP = L-prolyl-tRNA(Pro) + AMP + diphosphate. Functionally, catalyzes the attachment of proline to tRNA(Pro) in a two-step reaction: proline is first activated by ATP to form Pro-AMP and then transferred to the acceptor end of tRNA(Pro). As ProRS can inadvertently accommodate and process non-cognate amino acids such as alanine and cysteine, to avoid such errors it has two additional distinct editing activities against alanine. One activity is designated as 'pretransfer' editing and involves the tRNA(Pro)-independent hydrolysis of activated Ala-AMP. The other activity is designated 'posttransfer' editing and involves deacylation of mischarged Ala-tRNA(Pro). The misacylated Cys-tRNA(Pro) is not edited by ProRS. The polypeptide is Proline--tRNA ligase (Levilactobacillus brevis (strain ATCC 367 / BCRC 12310 / CIP 105137 / JCM 1170 / LMG 11437 / NCIMB 947 / NCTC 947) (Lactobacillus brevis)).